A 62-amino-acid chain; its full sequence is Photosystem II reaction center protein Z (62 aa).

2 helical membrane-spanning segments follow: residues 8–28 and 41–61; these read AVFALIATSLILLISVPVVFA and FSGTSLWIGLVFLVAILNSLI.

The protein belongs to the PsbZ family. In terms of assembly, PSII is composed of 1 copy each of membrane proteins PsbA, PsbB, PsbC, PsbD, PsbE, PsbF, PsbH, PsbI, PsbJ, PsbK, PsbL, PsbM, PsbT, PsbY, PsbZ, Psb30/Ycf12, at least 3 peripheral proteins of the oxygen-evolving complex and a large number of cofactors. It forms dimeric complexes.

It is found in the plastid. Its subcellular location is the chloroplast thylakoid membrane. Its function is as follows. May control the interaction of photosystem II (PSII) cores with the light-harvesting antenna, regulates electron flow through the 2 photosystem reaction centers. PSII is a light-driven water plastoquinone oxidoreductase, using light energy to abstract electrons from H(2)O, generating a proton gradient subsequently used for ATP formation. The sequence is that of Photosystem II reaction center protein Z from Phalaenopsis aphrodite subsp. formosana (Moth orchid).